We begin with the raw amino-acid sequence, 360 residues long: Archaemetzincin-2 (360 aa).

Position 254 (H254) interacts with Zn(2+). Catalysis depends on E255, which acts as the Proton acceptor. Zn(2+)-binding residues include H258, H264, C265, C270, C289, and C292.

This sequence belongs to the peptidase M54 family. Zn(2+) is required as a cofactor.

In terms of biological role, probable zinc metalloprotease. The sequence is that of Archaemetzincin-2 (AMZ2) from Macaca fascicularis (Crab-eating macaque).